The chain runs to 289 residues: Extracellular ribonuclease (289 aa).

Residues methionine 1 to alanine 24 form the signal peptide. The propeptide occupies serine 25–glutamine 51. A disordered region spans residues phenylalanine 177–tryptophan 197.

It is found in the secreted. Functionally, mg(2+)-activated ribonuclease which hydrolyzes RNA apparently nonspecifically into oligonucleotides with 5'-terminal phosphate. The protein is Extracellular ribonuclease (bsn) of Bacillus amyloliquefaciens (Bacillus velezensis).